The primary structure comprises 394 residues: MAKEKFERSKPHVNVGTIGHVDHGKTTLTAAITKVMAEKNGGMARKFDEIDSAPEEKARGITINTSHVEYESPNRHYAHVDCPGHADYVKNMITGAAQMDGAILVCSAADGPMPQTREHILLSRQVGVPKIVVFLNKCDMVDDEELLELVEMEVRELLDQYEFPGDDTPVIMGSALRAIEGDEAYVEKIVELVQAMDDYIPAPERDTEKPFILPIEDVFSISGRGTVVTGRIERGVVNIGDEVEVVGIRPTQKTTVTGVEMFRKLLDRGEAGDNVGILVRGLKRDDVERGQVLCKPGSIKPHTKFEAEVYVLSKEEGGRHTPFFKGYRPQFYFRTTDITGAVELPEGVEMVMPGDNVKMTITLINPIAMDEGLRFAIREGGRTVGAGVVAKIIE.

One can recognise a tr-type G domain in the interval 10-204 (KPHVNVGTIG…AMDDYIPAPE (195 aa)). The interval 19–26 (GHVDHGKT) is G1. 19–26 (GHVDHGKT) contacts GTP. Threonine 26 contacts Mg(2+). A G2 region spans residues 60-64 (GITIN). The interval 81–84 (DCPG) is G3. GTP-binding positions include 81-85 (DCPGH) and 136-139 (NKCD). The tract at residues 136-139 (NKCD) is G4. The interval 174 to 176 (SAL) is G5.

The protein belongs to the TRAFAC class translation factor GTPase superfamily. Classic translation factor GTPase family. EF-Tu/EF-1A subfamily. Monomer.

It localises to the cytoplasm. It carries out the reaction GTP + H2O = GDP + phosphate + H(+). In terms of biological role, GTP hydrolase that promotes the GTP-dependent binding of aminoacyl-tRNA to the A-site of ribosomes during protein biosynthesis. This is Elongation factor Tu from Francisella tularensis subsp. tularensis (strain FSC 198).